The chain runs to 118 residues: UPF0102 protein Cphy_2398 (118 aa).

The protein belongs to the UPF0102 family.

In Lachnoclostridium phytofermentans (strain ATCC 700394 / DSM 18823 / ISDg) (Clostridium phytofermentans), this protein is UPF0102 protein Cphy_2398.